The following is a 317-amino-acid chain: Putative 2-hydroxyacid dehydrogenase SE_1879 (317 aa).

Residues 155-156, 234-236, and D260 contribute to the NAD(+) site; these read EI and AGR. R236 is an active-site residue. E265 is an active-site residue. The Proton donor role is filled by H283. 283–286 contacts NAD(+); it reads HIGN.

This sequence belongs to the D-isomer specific 2-hydroxyacid dehydrogenase family.

The sequence is that of Putative 2-hydroxyacid dehydrogenase SE_1879 from Staphylococcus epidermidis (strain ATCC 12228 / FDA PCI 1200).